The chain runs to 259 residues: Probable metal transport system ATP-binding protein CT_068 (259 aa).

The 233-residue stretch at 9–241 (WSVEDLCVNY…AIFQAYGCEL (233 aa)) folds into the ABC transporter domain. An ATP-binding site is contributed by 41–48 (GPNGAGKS).

Belongs to the ABC transporter superfamily.

The protein resides in the cell inner membrane. Functionally, part of an ATP-driven transport system CT_067/CT_068/CT_069/CT_070 for a metal. Probably responsible for energy coupling to the transport system. This chain is Probable metal transport system ATP-binding protein CT_068, found in Chlamydia trachomatis serovar D (strain ATCC VR-885 / DSM 19411 / UW-3/Cx).